The primary structure comprises 629 residues: MMDSFAQDWPTLTHTDNGLAMDQLSGVVGGGDLPGDVGFEPQTRARSNTWPCPRPENFVEQADELDSTKASNQQLADSQQAIQNANAAKKNSSRRNAWGNLSYADLITHAIGSATDKRLTLSQIYEWMVQNVPYFKDKGDSNSSAGWKNSIRHNLSLHNRFMRVQNEGTGKSSWWMLNPEAKPGKSVRRRAASMETSRYEKRRGRAKKRVEALRQAGVVGLNDATPSPSSSVSEGLDHFPESPLHSGGGFQLSPDFRQRASSNASSCGRLSPIRAQDLEPQDLWGFPVDYQNTTMTQAHAQALEELTGSMADELTLCNQQQQQFSAASGLPSQPPPPPYQPPQLQQQQQQQPSYSLNGPAPGGYQTLQPQSQSQCLLHRSLNCSCLHNARDGLSPNSVTTTMSPAYPNSEPSSDSLNTYSNVVLDGSSDLLVQQQQQQQLQQQQVKVEFEGQCLEVLNNEAQPIDEFNLENFPVGNLECNVEELLQQEMSYDGLLDINIPLANVSTNAPLVSLVNNSTTLSSSSSNLSGSTTTLSSSSLSAAVQLNQLQAQLQQQQQQQQQQQHLQQQQQQHHQHQQQLLLNNNNNNNNNNSSNSSLDLATQTAATNLNAARVQYSQPSVVTSPPSWVH.

The residue at position 49 (threonine 49) is a Phosphothreonine; by PKB/AKT1. A Phosphoserine modification is found at serine 78. Positions 98–204 (WGNLSYADLI…ETSRYEKRRG (107 aa)) form a DNA-binding region, fork-head. 5 disordered regions span residues 185 to 208 (KSVR…RAKK), 220 to 274 (GLND…SPIR), 321 to 368 (QQQF…QTLQ), 394 to 417 (SPNS…DSLN), and 563 to 597 (QHLQ…NSSL). Serine 193 carries the post-translational modification Phosphoserine; by PKB/AKT1. Composition is skewed to polar residues over residues 224 to 233 (ATPSPSSSVS) and 259 to 268 (RASSNASSCG). Serine 262 carries the phosphoserine; by PKB/AKT1 modification. Phosphoserine is present on residues serine 265, serine 266, and serine 271. The span at 332 to 341 (SQPPPPPYQP) shows a compositional bias: pro residues. Residues 342–356 (PQLQQQQQQQPSYSL) are compositionally biased toward low complexity. The span at 394-403 (SPNSVTTTMS) shows a compositional bias: polar residues.

As to quaternary structure, interacts with melt.

It localises to the cytoplasm. Its subcellular location is the nucleus. In terms of biological role, transcription factor involved in the regulation of the insulin signaling pathway. Consistently activates both the downstream target Thor\d4EBP and the feedback control target InR. Involved in negative regulation of the cell cycle, modulating cell growth and proliferation. In response to cellular stresses, such as nutrient deprivation or increased levels of reactive oxygen species, foxo is activated and inhibits growth through the action of target genes such as Thor. Foxo activated in the adult fat body can regulate lifespan in adults; an insulin peptide itself may function as one secondary messenger of insulin-regulated aging. Also regulates Lip4, homolog of human acid lipases, thereby acting as a key modulator of lipid metabolism by insulin signaling and integrates insulin responses to glucose and lipid homeostasis. This is Forkhead box protein O from Drosophila persimilis (Fruit fly).